The chain runs to 807 residues: Zinc finger protein 594 (807 aa).

The disordered stretch occupies residues 1-23; sequence MKEWKSKMEISEEKKSARAASEK. 8 C2H2-type zinc fingers span residues 127-149, 155-177, 183-205, 211-233, 239-261, 267-289, 295-317, and 323-345; these read YECKECEKTFNRSSNLIIHQRIH, YVCNECGKDSNQSSNLIIHQRIH, YICHECGKDFNQSSNLVRHKQIH, YECKECGKAFKGSSNLVLHQRIH, YLCNKCGKAFSQSTDLIIHHRIH, YECYDCGQMFSQSSHLVPHQRIH, LKCNECEKAFRQHSHLTEHQRLH, and YECHRCGKTFSGRTAFLKHQRLH. Residues 348–370 form a C2H2-type 9; degenerate zinc finger; that stretch reads EKIEECEKTFSKDEELREEQRIH. C2H2-type zinc fingers lie at residues 376–398, 404–426, 432–454, 460–482, 488–510, and 516–538; these read YWCNQCGRNFQGTSDLIRHQVTH, YECKECGKTFNQSSDLLRHHRIH, CVCSKCGKSFRGSSDLIRHHRVH, YECSECGKAFSQRSHLVTHQKIH, YQCTECGKAFRRRSLLIQHRRIH, and YECKECGKLFIWRTAFLKHQSLH. A C2H2-type 16; degenerate zinc finger spans residues 543 to 562; that stretch reads LECEKTFSQDEELRGEQKIH. C2H2-type zinc fingers lie at residues 568 to 590, 596 to 618, 624 to 646, 652 to 674, 680 to 702, and 708 to 730; these read YWCNQCGRAFQGSSDLIRHQVTH, YECKECGKTFNQSSDLLRHHRIH, YVCNKCGKSFRGSSDLIKHHRIH, YECSECGKAFSQRSHLATHQKIH, YQCSECGNAFRRRSLLIQHRRLH, and YECKECGKLFMWHTAFLKHQRLH. The C2H2-type 23; degenerate zinc-finger motif lies at 733 to 755; it reads EKLEECEKTFSKDEELRKEQRTH. The segment at 761–783 adopts a C2H2-type 24 zinc-finger fold; sequence YWCNQCSRTFQGSSDLIRHQVTH.

This sequence belongs to the krueppel C2H2-type zinc-finger protein family.

The protein localises to the nucleus. May be involved in transcriptional regulation. The protein is Zinc finger protein 594 (ZNF594) of Homo sapiens (Human).